The sequence spans 933 residues: Myocardin (933 aa).

An MEF2C-binding motif is present at residues 12–27; the sequence is IRSKFRSVLQLRLQQR. RPEL repeat units lie at residues 18–43, 62–87, and 106–131; these read SVLQLRLQQRRTQEQLANEGIIPPLR, DTLKHKVRNRSDRGNVVKMHILQASS, and DDLNEKIALRPGPLELVEKNILPVDC. Positions 153-205 are HDAC5-binding; it reads FEEDSSSDGLSPDQTRSEDLPGSAGSPLDTKAAETPLAGPRGTVQDLTLGSEN. Disordered stretches follow at residues 154-282 and 324-365; these read EEDS…PPPM and NEQM…GPLP. The segment covering 210–220 has biased composition (polar residues); that stretch reads SAPQSGNQSDL. The span at 248–265 shows a compositional bias: basic residues; it reads NRHKKPKDPKPKVKKLKY. The span at 330–346 shows a compositional bias: low complexity; it reads NPNSSSAPLSSTPLSPA. Polar residues predominate over residues 347-357; that stretch reads KNSFSGQTGVS. Residues 368–402 enclose the SAP domain; sequence LDDLKVSELRQQLRIRGLPVSGTKTALMDRLRPFQ. 4 positions are modified to phosphoserine; by GSK3-beta: Ser-445, Ser-449, Ser-453, and Ser-457. Positions 515–550 form a coiled coil; sequence LVEKQKVINELTWKLQQEQRQVEELRMQLQKQKRGT. Residues 568–613 are disordered; that stretch reads DAGSSCPFAPLPRAVKRQSNSSEEQPAAGDAARLRPLGNTHCAESS. Residues Ser-621, Ser-625, Ser-629, and Ser-633 each carry the phosphoserine; by GSK3-beta modification. 2 disordered regions span residues 630–672 and 760–794; these read PQHS…VSSP and PKIPGSSRSPTAALPKPSATFDQASSGGQLAFDHY. The interval 712–933 is required for interaction with and ubiquitination by STUB1; it reads ITQPPSYEDA…SPMDLHLQQW (222 aa). A phosphoserine; by MAPK1 and MAPK3 mark is found at Ser-810, Ser-857, and Ser-864. Thr-891 bears the Phosphothreonine; by MAPK1 and MAPK3 mark.

Homodimer. Interacts with MLLT7/FOXO4. Interacts with SRF, its association does not depend on specific DNA sequences for ternary complex formation. Interacts (via C-terminal) with EP300 (via the CREB-binding domain). Interacts with HDAC4 and HDAC5. Interacts with MEF2C. Interacts (via C-terminus) with STUB1/CHIP. Interacts with PURB. Post-translationally, ubiquitinated; by STUB1/CHIP at the C-terminus, leading to its degradation by the proteasome. Phosphorylation by GSK3B is required for STUB1/CHIP-mediated ubiquitination. Phosphorylation negatively regulates the intrinsic myocardin transcriptional activity. Phosphorylated; by GSK3B. In terms of tissue distribution, expressed in the heart and in smooth muscle cells-containing tissues (aorta, pulmonary vein, lung), but is not detectable in skeletal muscle, liver, kidney and spleen.

The protein resides in the nucleus. In terms of biological role, smooth muscle cells (SM) and cardiac muscle cells-specific transcriptional factor which uses the canonical single or multiple CArG boxes DNA sequence. Acts as a cofactor of serum response factor (SRF) with the potential to modulate SRF-target genes. Plays a crucial role in cardiogenesis, urinary bladder development, and differentiation of the smooth muscle cell lineage (myogenesis). Positively regulates the transcription of genes involved in vascular smooth muscle contraction. This is Myocardin (MYOCD) from Sus scrofa (Pig).